The sequence spans 135 residues: UPF0355 protein SE_2351 (135 aa).

The protein belongs to the UPF0355 family.

This is UPF0355 protein SE_2351 from Staphylococcus epidermidis (strain ATCC 12228 / FDA PCI 1200).